The following is a 341-amino-acid chain: Cysteine and histidine-rich domain-containing protein 1 (341 aa).

Positions 5, 10, 24, 27, 42, 43, 59, 64, 155, 160, 174, 177, 192, 193, 209, and 214 each coordinate Zn(2+). 2 CHORD domains span residues 5-64 and 155-214; these read CYNK…KGPH and CKNG…RGKH. Residues 61–81 form a disordered region; that stretch reads KGPHNQEKPAEPVKPEVKSSL. The segment covering 64-81 has biased composition (basic and acidic residues); it reads HNQEKPAEPVKPEVKSSL. Residues 225-314 enclose the CS domain; it reads VVPCRFDWHQ…AEPMSWARLD (90 aa). Residues 313 to 341 are disordered; sequence LDLPPVAPPKEKEKEKDVDSEDECDDDED. Residues 330-341 show a composition bias toward acidic residues; sequence VDSEDECDDDED.

In terms of biological role, regulates centrosome duplication. In Danio rerio (Zebrafish), this protein is Cysteine and histidine-rich domain-containing protein 1 (chordc1).